Consider the following 516-residue polypeptide: 2-isopropylmalate synthase (516 aa).

One can recognise a Pyruvate carboxyltransferase domain in the interval 5-267 (IIIFDTTLRD…STDINIKEIH (263 aa)). Positions 14, 202, 204, and 238 each coordinate Mn(2+). Positions 393–516 (KLEYFDVQSK…VNKELERLQK (124 aa)) are regulatory domain.

The protein belongs to the alpha-IPM synthase/homocitrate synthase family. LeuA type 1 subfamily. As to quaternary structure, homodimer. Mn(2+) is required as a cofactor.

It is found in the cytoplasm. The enzyme catalyses 3-methyl-2-oxobutanoate + acetyl-CoA + H2O = (2S)-2-isopropylmalate + CoA + H(+). Its pathway is amino-acid biosynthesis; L-leucine biosynthesis; L-leucine from 3-methyl-2-oxobutanoate: step 1/4. Its function is as follows. Catalyzes the condensation of the acetyl group of acetyl-CoA with 3-methyl-2-oxobutanoate (2-ketoisovalerate) to form 3-carboxy-3-hydroxy-4-methylpentanoate (2-isopropylmalate). The polypeptide is 2-isopropylmalate synthase (Buchnera aphidicola subsp. Cinara cedri (strain Cc)).